The primary structure comprises 206 residues: MGYMIVEKHTSELLHLKRSPGIRSWSILVGIASVGLAAAYYSSDSILWKMFYVTGCFFVALQNMEEWEEAVFNKSKNEIELKTFSLYTMLLTLWKRGHEKVLLDLRHLRDVSVQEERVRYLGKGYLVVLRLATGFSYPLTQSATLGSRSDVEALAALLKRFLGLEELQQRLADDDYPDDDDGIEDLGLGDSSDSQDDPDGDDDEEH.

The chain crosses the membrane as a helical span at residues 21 to 43 (GIRSWSILVGIASVGLAAAYYSS). Positions 172–206 (ADDDYPDDDDGIEDLGLGDSSDSQDDPDGDDDEEH) are disordered. 2 stretches are compositionally biased toward acidic residues: residues 174–184 (DDYPDDDDGIE) and 193–206 (DSQDDPDGDDDEEH).

The protein belongs to the CYBC1 family.

It localises to the endoplasmic reticulum membrane. In terms of biological role, functions as a chaperone necessary for a stable expression of the CYBA and CYBB subunits of the cytochrome b-245 heterodimer. The chain is Cytochrome b-245 chaperone 1 homolog from Danio rerio (Zebrafish).